Here is a 335-residue protein sequence, read N- to C-terminus: N-acetyl-gamma-glutamyl-phosphate reductase (335 aa).

Cys155 is a catalytic residue.

This sequence belongs to the NAGSA dehydrogenase family. Type 1 subfamily.

It localises to the cytoplasm. The enzyme catalyses N-acetyl-L-glutamate 5-semialdehyde + phosphate + NADP(+) = N-acetyl-L-glutamyl 5-phosphate + NADPH + H(+). It participates in amino-acid biosynthesis; L-arginine biosynthesis; N(2)-acetyl-L-ornithine from L-glutamate: step 3/4. In terms of biological role, catalyzes the NADPH-dependent reduction of N-acetyl-5-glutamyl phosphate to yield N-acetyl-L-glutamate 5-semialdehyde. This Pasteurella multocida (strain Pm70) protein is N-acetyl-gamma-glutamyl-phosphate reductase.